The sequence spans 171 residues: Minor capsid protein 3 (171 aa).

Interacts with the major capsid protein.

The protein localises to the virion. One of the minor capsid proteins that constitute a network internal to the major capsid proteins and outside the lipid membrane. The minor capsid proteins glue and stabilize the capsomers. This is Minor capsid protein 3 from Chlorella (PBCV-1).